The chain runs to 156 residues: Small ribosomal subunit protein uS7 (156 aa).

The protein belongs to the universal ribosomal protein uS7 family. As to quaternary structure, part of the 30S ribosomal subunit. Contacts proteins S9 and S11.

Functionally, one of the primary rRNA binding proteins, it binds directly to 16S rRNA where it nucleates assembly of the head domain of the 30S subunit. Is located at the subunit interface close to the decoding center, probably blocks exit of the E-site tRNA. The sequence is that of Small ribosomal subunit protein uS7 from Listeria innocua serovar 6a (strain ATCC BAA-680 / CLIP 11262).